Consider the following 1365-residue polypeptide: Polyprotein ABA-1 (1365 aa).

Belongs to the NPA family. Nematode polyprotein allergens (NPAs) are synthesized as large polypeptides that are subsequently proteolytically cleaved to active polypeptide units. In terms of tissue distribution, pseudocoelomic fluid.

Functionally, has high binding affinity for fatty acids and retinoids. This chain is Polyprotein ABA-1 (ABA-1), found in Ascaris suum (Pig roundworm).